The sequence spans 339 residues: tRNA N6-adenosine threonylcarbamoyltransferase (339 aa).

2 residues coordinate Fe cation: His-111 and His-115. Substrate is bound by residues 139–143, Asp-172, Gly-185, Asp-189, and Asn-280; that span reads LVSGG. Asp-308 contacts Fe cation.

Belongs to the KAE1 / TsaD family. The cofactor is Fe(2+).

The protein resides in the cytoplasm. The enzyme catalyses L-threonylcarbamoyladenylate + adenosine(37) in tRNA = N(6)-L-threonylcarbamoyladenosine(37) in tRNA + AMP + H(+). In terms of biological role, required for the formation of a threonylcarbamoyl group on adenosine at position 37 (t(6)A37) in tRNAs that read codons beginning with adenine. Is involved in the transfer of the threonylcarbamoyl moiety of threonylcarbamoyl-AMP (TC-AMP) to the N6 group of A37, together with TsaE and TsaB. TsaD likely plays a direct catalytic role in this reaction. The polypeptide is tRNA N6-adenosine threonylcarbamoyltransferase (Phocaeicola vulgatus (strain ATCC 8482 / DSM 1447 / JCM 5826 / CCUG 4940 / NBRC 14291 / NCTC 11154) (Bacteroides vulgatus)).